Reading from the N-terminus, the 490-residue chain is MILHGFHLSTSSHCLPFIFRHLFIFHSITALCDHVISNYCNSLKLSNNKFNQMLSKFVVVEVSNSNNTMTLVEYLVTHGFDKFAVVTDLVDHPSFKYKDGSSSPESPSTTASTAAQHTPPRTAVSTPTSINTPVPPHQNKQRHSIDKIAANLSTKKVSPSSIEKQLQRTSHNPLHQLSTPHALSQLQKLLEEQHKINQMNIQKKEQERQQAEIQRILLQQANAAQINHSFGLERLTPEYDDNHHSETISKASSEDLKTEPDSTDFGLGTSDDQVRASMLHLLHPVFAPAFGMLDAENIFGAASKPTTPASKRRNTDSNGAPSKKHRWLPVNELEESRSSRGKNCGRVHCKATYKCALCGKPTTLNSTGSRWNLLRHVIMIHSDCKPYKCWDCDFTGIKSNVISHARQCRHNAEDAHDITTDEMRAEWNLRLHECFPDYVRAKERGWQPEEVTVKKEEVEESPTLVKQELTLVKQEPTFAEQLEPMAQPLV.

Disordered regions lie at residues 96 to 176 (KYKD…PLHQ), 236 to 262 (TPEYDDNHHSETISKASSEDLKTEPDS), and 302 to 326 (ASKPTTPASKRRNTDSNGAPSKKHR). A PEST region spans residues 101–110 (SSSPESPSTT). Low complexity predominate over residues 101–120 (SSSPESPSTTASTAAQHTPP). 2 stretches are compositionally biased toward polar residues: residues 123–132 (AVSTPTSINT) and 151–176 (NLSTKKVSPSSIEKQLQRTSHNPLHQ). Over residues 236–260 (TPEYDDNHHSETISKASSEDLKTEP) the composition is skewed to basic and acidic residues. The segment at 353–381 (YKCALCGKPTTLNSTGSRWNLLRHVIMIH) adopts a C2H2-type; degenerate zinc-finger fold.

Expressed in somatic gonads and germline precursors until the 50-cell stage. After the 100-cell stage, expression is seen in differentiating hypodermal and support cells (at protein level).

Its subcellular location is the nucleus. Probable transcription factor. Required to specify the fates of hypodermal and neuron-associated support cells. Functions during vulval development, playing a role in vulval precursor cell fate specification. Positively modulates expression of homeobox protein lin-39, perhaps by binding to regulatory regions of the lin-39 gene, acting in the vulval lineage. This chain is Transcription factor lin-26, found in Caenorhabditis elegans.